The chain runs to 990 residues: Sister chromatid cohesion protein PDS5 homolog E (990 aa).

5 HEAT repeats span residues 31–57, 58–96, 153–190, 191–228, and 232–269; these read DATL…SVQK, ALHP…ITAP, DLVL…DESE, EVPM…SCTC, and PCIM…HNDV. The disordered stretch occupies residues 262–565; sequence TTQAHNDVKP…AGEEVESNTN (304 aa). Positions 267 to 281 are enriched in basic and acidic residues; the sequence is NDVKPKDNEADEKIS. Residues 302 to 314 show a composition bias toward basic residues; it reads KGTRSKRSARGGT. 2 stretches are compositionally biased toward polar residues: residues 328–342 and 394–410; these read EGLS…ASGS and VGQT…SSGR. Basic and acidic residues-rich tracts occupy residues 421–430, 448–477, and 503–512; these read TKMEETDHDV, PAKE…EKAD, and VHSDAKKKNS. The Nuclear localization signal 1 motif lies at 458–465; it reads VKKHEDGI. 2 short sequence motifs (nuclear localization signal) span residues 539-546 and 583-590; these read TKKSEQAP and DKKFYEGV. The interval 653–966 is disordered; sequence KKRKIVSKNV…VGNEAEEDDQ (314 aa). The segment covering 662–673 has biased composition (low complexity); the sequence is VEPSSSPEVRSS. 2 short sequence motifs (nuclear localization signal) span residues 677–684 and 715–722; these read MKKKDSVT and LKKLNGEP. The span at 727 to 742 shows a compositional bias: basic residues; it reads GRTGKKQKVTQAMHRK. Residues 746-760 are compositionally biased toward acidic residues; that stretch reads DCDEQEDLETKDEED. 3 stretches are compositionally biased toward basic and acidic residues: residues 761–810, 819–890, and 898–947; these read SLKL…KTNG, TDGK…KETN, and EEQK…DKET.

The protein belongs to the PDS5 family. Interacts with the cohesin complex.

The protein resides in the nucleus. Functionally, cohesin cofactor dispensable during the meiotic division but playing an important role in DNA repair by homologous recombination (HR) probably by helping SMC5/SMC6 complex. Regulator of sister chromatid cohesion in mitosis which may stabilize cohesin complex association with chromatin. May couple sister chromatid cohesion during mitosis to DNA replication. Cohesion ensures that chromosome partitioning is accurate in both meiotic and mitotic cells and plays an important role in DNA repair. This Arabidopsis thaliana (Mouse-ear cress) protein is Sister chromatid cohesion protein PDS5 homolog E.